Consider the following 236-residue polypeptide: Urease accessory protein UreF (236 aa).

Belongs to the UreF family. UreD, UreF and UreG form a complex that acts as a GTP-hydrolysis-dependent molecular chaperone, activating the urease apoprotein by helping to assemble the nickel containing metallocenter of UreC. The UreE protein probably delivers the nickel.

The protein resides in the cytoplasm. Required for maturation of urease via the functional incorporation of the urease nickel metallocenter. This Granulibacter bethesdensis (strain ATCC BAA-1260 / CGDNIH1) protein is Urease accessory protein UreF.